A 115-amino-acid chain; its full sequence is MGTRLLCWVAFCLLVEELIEAGVVQSPRYKIIEKKQPVAFWCNPISGHNTLYWYLQNLGQGPELLIRYENEEAVDDSQLPKDRFSAERLKGVDSTLKIQPAELGDSAVYLCASSL.

The signal sequence occupies residues 1 to 21 (MGTRLLCWVAFCLLVEELIEA). The Ig-like domain occupies 22–115 (GVVQSPRYKI…SAVYLCASSL (94 aa)). Residues Cys42 and Cys111 are joined by a disulfide bond.

In terms of assembly, alpha-beta TR is a heterodimer composed of an alpha and beta chain; disulfide-linked. The alpha-beta TR is associated with the transmembrane signaling CD3 coreceptor proteins to form the TR-CD3 (TcR or TCR). The assembly of alpha-beta TR heterodimers with CD3 occurs in the endoplasmic reticulum where a single alpha-beta TR heterodimer associates with one CD3D-CD3E heterodimer, one CD3G-CD3E heterodimer and one CD247 homodimer forming a stable octameric structure. CD3D-CD3E and CD3G-CD3E heterodimers preferentially associate with TR alpha and TR beta chains, respectively. The association of the CD247 homodimer is the last step of TcR assembly in the endoplasmic reticulum and is required for transport to the cell surface.

It is found in the cell membrane. In terms of biological role, v region of the variable domain of T cell receptor (TR) beta chain that participates in the antigen recognition. Alpha-beta T cell receptors are antigen specific receptors which are essential to the immune response and are present on the cell surface of T lymphocytes. Recognize peptide-major histocompatibility (MH) (pMH) complexes that are displayed by antigen presenting cells (APC), a prerequisite for efficient T cell adaptive immunity against pathogens. Binding of alpha-beta TR to pMH complex initiates TR-CD3 clustering on the cell surface and intracellular activation of LCK that phosphorylates the ITAM motifs of CD3G, CD3D, CD3E and CD247 enabling the recruitment of ZAP70. In turn ZAP70 phosphorylates LAT, which recruits numerous signaling molecules to form the LAT signalosome. The LAT signalosome propagates signal branching to three major signaling pathways, the calcium, the mitogen-activated protein kinase (MAPK) kinase and the nuclear factor NF-kappa-B (NF-kB) pathways, leading to the mobilization of transcription factors that are critical for gene expression and essential for T cell growth and differentiation. The T cell repertoire is generated in the thymus, by V-(D)-J rearrangement. This repertoire is then shaped by intrathymic selection events to generate a peripheral T cell pool of self-MH restricted, non-autoaggressive T cells. Post-thymic interaction of alpha-beta TR with the pMH complexes shapes TR structural and functional avidity. This is T cell receptor beta variable 11-3 from Homo sapiens (Human).